Reading from the N-terminus, the 471-residue chain is MSAASEKPVVTRFAPSPTGYLHIGGARTALFNWLFARGRKGTFLLRIEDTDRERSTPEATDAILRGLTWLGLDWDGEVVSQFARKDRHAEVAREMLARGAAYKCFSTQDEIEAFREAARAEGRSTLFRSPWREADPSTHPDAPYVIRMKAPRTGETVIADRVQGTVRFQNETLDDMVVLRSDGTPTYMLAVVVDDHDMGVTHVIRGDDHLNNAARQTMVYEAMGWEVPIWAHIPLIHGPDGKKLSKRHGALGVEEYQAMGYPAAGMRNYLTRLGWAHGDDEFFTSEQAMAWFDLEGIGRSPARLDFKKLENVCGQHIAVMDDAAAMHEIQAYLAAARKPALTDLQAGRLSAALYALKDRAKTFPELLEKARFALESRPIAADDAAAKALDAVSRGILRELTPILQTASWSKQELEAALTAFAGEKGMGFGKLAGPLRAALAGRTVTPSVFDMMLVIGRDETIARLEDAAAA.

The short motif at 15–25 (PSPTGYLHIGG) is the 'HIGH' region element. Positions 243–247 (KLSKR) match the 'KMSKS' region motif. Lys-246 contacts ATP.

This sequence belongs to the class-I aminoacyl-tRNA synthetase family. Glutamate--tRNA ligase type 1 subfamily. Monomer.

Its subcellular location is the cytoplasm. It carries out the reaction tRNA(Glu) + L-glutamate + ATP = L-glutamyl-tRNA(Glu) + AMP + diphosphate. Its function is as follows. Catalyzes the attachment of glutamate to tRNA(Glu) in a two-step reaction: glutamate is first activated by ATP to form Glu-AMP and then transferred to the acceptor end of tRNA(Glu). In Cereibacter sphaeroides (strain ATCC 17025 / ATH 2.4.3) (Rhodobacter sphaeroides), this protein is Glutamate--tRNA ligase 2.